The chain runs to 382 residues: Lipid-A-disaccharide synthase (382 aa).

It belongs to the LpxB family.

It carries out the reaction 2-N,3-O-bis[(3R)-3-hydroxytetradecanoyl]-alpha-D-glucosaminyl 1-phosphate + UDP-2-N,3-O-bis[(3R)-3-hydroxytetradecanoyl]-alpha-D-glucosamine = lipid A disaccharide (E. coli) + UDP + H(+). The enzyme catalyses a lipid X + a UDP-2-N,3-O-bis[(3R)-3-hydroxyacyl]-alpha-D-glucosamine = a lipid A disaccharide + UDP + H(+). The protein operates within glycolipid biosynthesis; lipid IV(A) biosynthesis; lipid IV(A) from (3R)-3-hydroxytetradecanoyl-[acyl-carrier-protein] and UDP-N-acetyl-alpha-D-glucosamine: step 5/6. Condensation of UDP-2,3-diacylglucosamine and 2,3-diacylglucosamine-1-phosphate to form lipid A disaccharide, a precursor of lipid A, a phosphorylated glycolipid that anchors the lipopolysaccharide to the outer membrane of the cell. In Escherichia coli (strain 55989 / EAEC), this protein is Lipid-A-disaccharide synthase.